The sequence spans 436 residues: Na(+)/H(+) antiporter NhaA (436 aa).

11 consecutive transmembrane segments (helical) span residues 14 to 34 (AGGIVLIAATILTLILSNSTW), 59 to 79 (LHHWINDGLMAVFFFVVGLEL), 95 to 115 (ALPVIAALGGMLAPALIYHQF), 125 to 145 (WGIPMATDIAFAIGILVLLAW), 152 to 172 (IIFLTALAIADDLGAVLVIAI), 176 to 196 (PALHIKALMIAALLLLALLLF), 214 to 234 (FWYFVILSGIHATVAGIFLAF), 300 to 320 (AIQPWVTFAVLPVFALANAGI), 336 to 356 (IGTCLGLVLGKFLGIGLSSWL), 374 to 394 (LLGAAWLGGIGFTMSLFIGQL), and 407 to 427 (LGILLASLIAASIGLLWLFQV).

Belongs to the NhaA Na(+)/H(+) (TC 2.A.33) antiporter family.

It is found in the cell inner membrane. The catalysed reaction is Na(+)(in) + 2 H(+)(out) = Na(+)(out) + 2 H(+)(in). Functionally, na(+)/H(+) antiporter that extrudes sodium in exchange for external protons. The protein is Na(+)/H(+) antiporter NhaA of Acidithiobacillus ferrooxidans (strain ATCC 23270 / DSM 14882 / CIP 104768 / NCIMB 8455) (Ferrobacillus ferrooxidans (strain ATCC 23270)).